Reading from the N-terminus, the 34-residue chain is Photosystem II reaction center protein M (34 aa).

The helical transmembrane segment at 5–25 threads the bilayer; that stretch reads ILAFIATALFISIPTAFLLIP.

It belongs to the PsbM family. As to quaternary structure, PSII is composed of 1 copy each of membrane proteins PsbA, PsbB, PsbC, PsbD, PsbE, PsbF, PsbH, PsbI, PsbJ, PsbK, PsbL, PsbM, PsbT, PsbX, PsbY, PsbZ, Psb30/Ycf12, at least 3 peripheral proteins of the oxygen-evolving complex and a large number of cofactors. It forms dimeric complexes.

It localises to the plastid. The protein localises to the chloroplast thylakoid membrane. One of the components of the core complex of photosystem II (PSII). PSII is a light-driven water:plastoquinone oxidoreductase that uses light energy to abstract electrons from H(2)O, generating O(2) and a proton gradient subsequently used for ATP formation. It consists of a core antenna complex that captures photons, and an electron transfer chain that converts photonic excitation into a charge separation. This subunit is found at the monomer-monomer interface. The sequence is that of Photosystem II reaction center protein M from Psilotum nudum (Whisk fern).